The chain runs to 288 residues: 4-diphosphocytidyl-2-C-methyl-D-erythritol kinase (288 aa).

The active site involves lysine 11. 95-105 (PVAAGMAGGSS) serves as a coordination point for ATP. The active site involves aspartate 137.

This sequence belongs to the GHMP kinase family. IspE subfamily.

It catalyses the reaction 4-CDP-2-C-methyl-D-erythritol + ATP = 4-CDP-2-C-methyl-D-erythritol 2-phosphate + ADP + H(+). Its pathway is isoprenoid biosynthesis; isopentenyl diphosphate biosynthesis via DXP pathway; isopentenyl diphosphate from 1-deoxy-D-xylulose 5-phosphate: step 3/6. Functionally, catalyzes the phosphorylation of the position 2 hydroxy group of 4-diphosphocytidyl-2C-methyl-D-erythritol. The polypeptide is 4-diphosphocytidyl-2-C-methyl-D-erythritol kinase (Lachnospira eligens (strain ATCC 27750 / DSM 3376 / VPI C15-48 / C15-B4) (Eubacterium eligens)).